We begin with the raw amino-acid sequence, 65 residues long: Seminal plasma acrosin inhibitor A1 (65 aa).

The Kazal-like domain maps to 1-59; sequence TRKQPNCNVYRSHLFFCTRQMDPICGTNGKSYANPCIFCSEKGLRNQKFDFGHWGHCRE. 3 cysteine pairs are disulfide-bonded: Cys7–Cys39, Cys17–Cys36, and Cys25–Cys57. A glycan (O-linked (GalNAc...) serine) is linked at Ser12. Ser62 carries O-linked (GalNAc...) serine glycosylation.

The identity of the O-linked saccharides are not reported in Ref.1. The O-linked polysaccharides on Ser-12 and Ser-62 are probably the mucin type linked to GalNAc. As to expression, seminal plasma.

Its subcellular location is the secreted. Its function is as follows. Inhibits acrosin. The polypeptide is Seminal plasma acrosin inhibitor A1 (Sus scrofa (Pig)).